Here is a 177-residue protein sequence, read N- to C-terminus: Large ribosomal subunit protein uL6 (177 aa).

This sequence belongs to the universal ribosomal protein uL6 family. Part of the 50S ribosomal subunit.

This protein binds to the 23S rRNA, and is important in its secondary structure. It is located near the subunit interface in the base of the L7/L12 stalk, and near the tRNA binding site of the peptidyltransferase center. The sequence is that of Large ribosomal subunit protein uL6 from Ralstonia pickettii (strain 12J).